The following is a 274-amino-acid chain: Diaminopimelate epimerase (274 aa).

Residues N11, Q44, and N64 each contribute to the substrate site. C73 (proton donor) is an active-site residue. Substrate-binding positions include 74–75 (GN), N157, N190, and 208–209 (ER). C217 (proton acceptor) is an active-site residue. 218-219 (GS) contributes to the substrate binding site.

It belongs to the diaminopimelate epimerase family. Homodimer.

Its subcellular location is the cytoplasm. The enzyme catalyses (2S,6S)-2,6-diaminopimelate = meso-2,6-diaminopimelate. It functions in the pathway amino-acid biosynthesis; L-lysine biosynthesis via DAP pathway; DL-2,6-diaminopimelate from LL-2,6-diaminopimelate: step 1/1. Functionally, catalyzes the stereoinversion of LL-2,6-diaminopimelate (L,L-DAP) to meso-diaminopimelate (meso-DAP), a precursor of L-lysine and an essential component of the bacterial peptidoglycan. In Escherichia fergusonii (strain ATCC 35469 / DSM 13698 / CCUG 18766 / IAM 14443 / JCM 21226 / LMG 7866 / NBRC 102419 / NCTC 12128 / CDC 0568-73), this protein is Diaminopimelate epimerase.